The sequence spans 295 residues: Putative clathrin assembly protein At5g65370 (295 aa).

The 144-residue stretch at 26 to 169 folds into the ENTH domain; that stretch reads CSSVNAKTID…SIAEVLGITP (144 aa).

The protein resides in the membrane. The protein localises to the clathrin-coated pit. It localises to the golgi apparatus. Its subcellular location is the cytoplasmic vesicle. It is found in the clathrin-coated vesicle. The chain is Putative clathrin assembly protein At5g65370 from Arabidopsis thaliana (Mouse-ear cress).